We begin with the raw amino-acid sequence, 703 residues long: Subtilisin-like protease SBT4.7 (703 aa).

The first 19 residues, 1–19 (MAKRDYFCFVVLFLSSVSA), serve as a signal peptide directing secretion. Residues 20 to 107 (VIDDPQNKQV…VFPNINYKLQ (88 aa)) constitute a propeptide, activation peptide. An Inhibitor I9 domain is found at 29-106 (VYVVYMGSLP…SVFPNINYKL (78 aa)). One can recognise a Peptidase S8 domain in the interval 111 to 556 (SWDFLGLKEG…AGHVDQIAAI (446 aa)). Asp-139 serves as the catalytic Charge relay system. The N-linked (GlcNAc...) asparagine glycan is linked to Asn-170. His-194 (charge relay system) is an active-site residue. N-linked (GlcNAc...) asparagine glycans are attached at residues Asn-217, Asn-360, Asn-416, and Asn-433. One can recognise a PA domain in the interval 350 to 411 (KYPLVYGDNF…LLPPDDFDSL (62 aa)). The Charge relay system role is filled by Ser-495. Asn-577, Asn-615, and Asn-633 each carry an N-linked (GlcNAc...) asparagine glycan.

This sequence belongs to the peptidase S8 family. The C-terminal propeptide is autocleaved.

The protein localises to the secreted. The polypeptide is Subtilisin-like protease SBT4.7 (Arabidopsis thaliana (Mouse-ear cress)).